Reading from the N-terminus, the 429-residue chain is U3 small nucleolar RNA-associated protein 18 homolog (429 aa).

WD repeat units lie at residues 117–156 (RYTR…KKDR), 295–336 (TDDG…NSTN), 345–386 (NLVT…TFKN), and 392–428 (GKVT…HFTD).

The protein belongs to the WD repeat UTP18 family.

The protein localises to the nucleus. Its subcellular location is the nucleolus. Its function is as follows. Involved in nucleolar processing of pre-18S ribosomal RNA. The polypeptide is U3 small nucleolar RNA-associated protein 18 homolog (Caenorhabditis elegans).